Here is a 1414-residue protein sequence, read N- to C-terminus: Phenyloxazoline synthase MbtB (1414 aa).

The 74-residue stretch at 5 to 78 (TACSEIIRAE…AWSQLVSAGT (74 aa)) folds into the Carrier 1 domain. Residue Ser39 is modified to O-(pantetheine 4'-phosphoryl)serine. The condensation/cyclization stretch occupies residues 96 to 394 (EGEPFPLAPM…SSLLLDVDLT (299 aa)). The tract at residues 579–975 (SYAQLRDQAS…RLPGVHAAAA (397 aa)) is adenylation. One can recognise a Carrier 2 domain in the interval 1057 to 1135 (APRTVLQRAL…ALAQLLTGRE (79 aa)). Ser1094 bears the O-(pantetheine 4'-phosphoryl)serine mark. The interval 1188–1413 (GAVLVFPHAG…AVARMVSADV (226 aa)) is thioesterase.

This sequence belongs to the ATP-dependent AMP-binding enzyme family. MbtB subfamily. Pantetheine 4'-phosphate is required as a cofactor. Post-translationally, 4'-phosphopantetheine is transferred from CoA to a specific serine in each of the two carrier protein domains, leading to their activation from apo to holo forms.

Its pathway is siderophore biosynthesis; mycobactin biosynthesis. In terms of biological role, involved in the initial steps of the mycobactin biosynthetic pathway. Putatively couples activated salicylic acid with serine or threonine and cyclizes this precursor to the hydroxyphenyloxazoline ring system present in this class of siderophores. Essential for growth in macrophages. In Mycobacterium tuberculosis (strain ATCC 25618 / H37Rv), this protein is Phenyloxazoline synthase MbtB (mbtB).